The chain runs to 76 residues: Large ribosomal subunit protein bL28 (76 aa).

A disordered region spans residues 21-42 (RGKAKKEGGVGKHITKTSRRRQ). Residues 33–42 (HITKTSRRRQ) show a composition bias toward basic residues.

Belongs to the bacterial ribosomal protein bL28 family.

The polypeptide is Large ribosomal subunit protein bL28 (Halothermothrix orenii (strain H 168 / OCM 544 / DSM 9562)).